The sequence spans 206 residues: Cytochrome c (206 aa).

3 helical membrane passes run 10–30 (IALAVGGAVLMGALFFSVSFL), 49–69 (FMGWFLLIFCASIIIMGLGKM), and 76–96 (KWFLSFPLSIFVIVMVMFLSL). Heme contacts are provided by Cys152, Cys155, His156, and Met182.

Monomer. Component of the photosynthetic reaction center composed of protein subunits PscA, PscC, PscB and PscD. The reaction center interacts with FmoA (which forms the Fenna-Matthews-Olson (FMO) complex). The reaction center/FmoA complex has two PscA subunits, one PscB and one PscD subunit, probably two FmoA complexes and at least one PscC subunit. Binds 1 heme group per subunit.

The protein resides in the cell inner membrane. Functionally, monoheme cytochrome which is the immediate electron donor to P840 of the photosynthetic reaction center complex. The protein is Cytochrome c (pscC) of Chlorobaculum tepidum (strain ATCC 49652 / DSM 12025 / NBRC 103806 / TLS) (Chlorobium tepidum).